The following is a 130-amino-acid chain: Small ribosomal subunit protein uS9 (130 aa).

This sequence belongs to the universal ribosomal protein uS9 family.

This Yersinia pseudotuberculosis serotype O:1b (strain IP 31758) protein is Small ribosomal subunit protein uS9.